The primary structure comprises 278 residues: HTH-type transcriptional activator RhaS (278 aa).

Residues 174 to 272 (NQLMAWLEDH…NWSPRDIRQG (99 aa)) form the HTH araC/xylS-type domain. 2 DNA-binding regions (H-T-H motif) span residues 191 to 212 (EAVA…KQHT) and 239 to 262 (VTEI…RREF).

As to quaternary structure, binds DNA as a dimer.

The protein localises to the cytoplasm. Its function is as follows. Activates expression of the rhaBAD and rhaT operons. This chain is HTH-type transcriptional activator RhaS, found in Salmonella paratyphi A (strain ATCC 9150 / SARB42).